Here is a 605-residue protein sequence, read N- to C-terminus: Solute carrier family 23 member 1 (605 aa).

Residues 1-30 (MKTPEDPGSPKQHEVVDSAGTSTRDRQAPL) form a disordered region. At 1–59 (MKTPEDPGSPKQHEVVDSAGTSTRDRQAPLPTEPKFDMLYKIEDVPPWYLCILLGFQHY) the chain is on the cytoplasmic side. Residues 60–80 (LTCFSGTIAVPFLLAEALCVG) form a helical membrane-spanning segment. Over 81–88 (RDQHMVSQ) the chain is Extracellular. The helical transmembrane segment at 89 to 109 (LIGTIFTCVGITTLIQTTVGI) threads the bilayer. Residue R110 is a topological domain, cytoplasmic. Residues 111 to 131 (LPLFQASAFAFLVPAKSILAL) traverse the membrane as a helical segment. Topologically, residues 132 to 166 (ERWKCPSEEEIYGNWSMPLNTSHIWHPRIREVQGA) are extracellular. N-linked (GlcNAc...) asparagine glycans are attached at residues N145 and N151. Residues 167-187 (IMVSSMVEVVIGLMGLPGALL) traverse the membrane as a helical segment. At 188–214 (SYIGPLTVTPTVSLIGLSVFQAAGDRA) the chain is on the cytoplasmic side. A helical membrane pass occupies residues 215–232 (GSHWGISACSILLIVLFS). The Extracellular segment spans residues 233–236 (QYLR). The helical intramembrane region spans 237-250 (NLTFLLPVYRWGKG). Topologically, residues 251 to 257 (LTLFRVQ) are extracellular. A helical membrane pass occupies residues 258–278 (IFKMFPIVLAIMTVWLLCYVL). Residues 279-319 (TLTDVLPADPTVYGFQARTDARGDIMAISPWIRIPYPCQWG) are Cytoplasmic-facing. Residues 320–340 (LPTVTVAAVLGMFSATLAGII) form a helical membrane-spanning segment. Over 341-365 (ESIGDYYACARLAGAPPPPVHAINR) the chain is Extracellular. The chain crosses the membrane as a helical span at residues 366 to 386 (GIFTEGICCIIAGLLGTGNGS). The Cytoplasmic segment spans residues 387 to 409 (TSSSPNIGVLGITKVGSRRVVQY). Residues 410-430 (GAGIMLILGAIGKFTALFASL) form a helical membrane-spanning segment. Topologically, residues 431–433 (PDP) are extracellular. Residues 434 to 454 (ILGGMFCTLFGMITAVGLSNL) traverse the membrane as a helical segment. The Cytoplasmic portion of the chain corresponds to 455–464 (QFVDMNSSRN). The helical transmembrane segment at 465–485 (LFVLGFSMFFGLTLPNYLDSN) threads the bilayer. Over 486 to 497 (PGAINTGIPEVD) the chain is Extracellular. The chain crosses the membrane as a helical span at residues 498 to 518 (QILTVLLTTEMFVGGCLAFIL). The Cytoplasmic portion of the chain corresponds to 519 to 605 (DNTVPGSPEE…IETGSVCTKV (87 aa)). T598 is modified (phosphothreonine). Phosphoserine is present on S600. Position 603 is a phosphothreonine (T603).

The protein belongs to the nucleobase:cation symporter-2 (NCS2) (TC 2.A.40) family. Phosphorylated. In terms of tissue distribution, expressed in kidney (at protein level).

The protein resides in the cell membrane. The enzyme catalyses L-ascorbate(out) + 2 Na(+)(out) = L-ascorbate(in) + 2 Na(+)(in). It carries out the reaction urate(out) + 2 Na(+)(out) = urate(in) + 2 Na(+)(in). In terms of biological role, sodium:L-ascorbate cotransporter. Mediates electrogenic uptake of vitamin C, with a stoichiometry of 2 Na(+) for each L-ascorbate. Has retained some ancestral activity toward nucleobases such as urate, an oxidized purine. Low-affinity high-capacity sodium:urate cotransporter, may regulate serum urate levels by serving as a renal urate re-absorber. The sequence is that of Solute carrier family 23 member 1 (Slc23a1) from Mus musculus (Mouse).